A 305-amino-acid chain; its full sequence is Divergent heme oxygenase-like protein (305 aa).

The signal sequence occupies residues 1 to 18 (MIRKIIILMFTFFSNIHN). The tract at residues 1-83 (MIRKIIILMF…GVDKNNINYN (83 aa)) is sufficient for apicoplast targeting. Residues asparagine 132, asparagine 159, and asparagine 288 are each glycosylated (N-linked (GlcNAc...) asparagine).

In terms of processing, proteolytically cleaved; targeted by its N-terminal leader sequence for import into the apicoplast where it undergoes proteolytic processing, resulting in an N-terminus starting at or near Gly-33 in the mature protein.

The protein localises to the plastid. It localises to the apicoplast. In terms of biological role, essential for blood-stage parasite viability. Required for apicoplast biogenesis. Associates with the apicoplast genome and mediates apicoplast gene expression. Can bind heme. Can bind protoporphyrin IX. This chain is Divergent heme oxygenase-like protein, found in Plasmodium falciparum (isolate 3D7).